Consider the following 283-residue polypeptide: 4-diphosphocytidyl-2-C-methyl-D-erythritol kinase (283 aa).

The active site involves K10. 99–109 (PMGGGLGGGSS) is a binding site for ATP. Residue D141 is part of the active site.

The protein belongs to the GHMP kinase family. IspE subfamily. Homodimer.

The enzyme catalyses 4-CDP-2-C-methyl-D-erythritol + ATP = 4-CDP-2-C-methyl-D-erythritol 2-phosphate + ADP + H(+). It participates in isoprenoid biosynthesis; isopentenyl diphosphate biosynthesis via DXP pathway; isopentenyl diphosphate from 1-deoxy-D-xylulose 5-phosphate: step 3/6. In terms of biological role, catalyzes the phosphorylation of the position 2 hydroxy group of 4-diphosphocytidyl-2C-methyl-D-erythritol. This is 4-diphosphocytidyl-2-C-methyl-D-erythritol kinase from Salmonella paratyphi C (strain RKS4594).